We begin with the raw amino-acid sequence, 104 residues long: Replication restart protein PriB (104 aa).

One can recognise an SSB domain in the interval 1–101 (MTNRLVLSGT…LHAEQIELID (101 aa)).

Belongs to the PriB family. In terms of assembly, homodimer. Interacts with PriA and DnaT. Component of the replication restart primosome. Primosome assembly occurs via a 'hand-off' mechanism. PriA binds to replication forks, subsequently PriB then DnaT bind; DnaT then displaces ssDNA to generate the helicase loading substrate.

Functionally, involved in the restart of stalled replication forks, which reloads the replicative helicase on sites other than the origin of replication; the PriA-PriB pathway is the major replication restart pathway. During primosome assembly it facilitates complex formation between PriA and DnaT on DNA; stabilizes PriA on DNA. Stimulates the DNA unwinding activity of PriA helicase. The polypeptide is Replication restart protein PriB (Shigella dysenteriae serotype 1 (strain Sd197)).